Consider the following 695-residue polypeptide: Elongation factor G (695 aa).

Positions 12–286 constitute a tr-type G domain; sequence DKIRNIGIMA…AVIDYLPSPL (275 aa). Residues 21–28, 85–89, and 139–142 each bind GTP; these read AHIDAGKT, DTPGH, and NKMD.

Belongs to the TRAFAC class translation factor GTPase superfamily. Classic translation factor GTPase family. EF-G/EF-2 subfamily.

The protein resides in the cytoplasm. Catalyzes the GTP-dependent ribosomal translocation step during translation elongation. During this step, the ribosome changes from the pre-translocational (PRE) to the post-translocational (POST) state as the newly formed A-site-bound peptidyl-tRNA and P-site-bound deacylated tRNA move to the P and E sites, respectively. Catalyzes the coordinated movement of the two tRNA molecules, the mRNA and conformational changes in the ribosome. This Thermotoga neapolitana (strain ATCC 49049 / DSM 4359 / NBRC 107923 / NS-E) protein is Elongation factor G.